The primary structure comprises 271 residues: Colicin-M (271 aa).

Positions 2–9 (ETLTVHAP) match the TonB box motif.

In terms of biological role, colicins are polypeptide toxins produced by and active against E.coli and closely related bacteria. This is a calcium-requiring inhibitor for murein biosynthesis; it causes lysis of sensitive cells accompanied by murein degradation. The target site is possibly the cytoplasmic membrane. The sequence is that of Colicin-M (cma) from Escherichia coli.